The following is a 502-amino-acid chain: Phenylalanine--tRNA ligase alpha subunit (502 aa).

L-phenylalanine is bound by residues Thr339, 382–384, and Tyr422; that span reads QIE. Glu424 lines the Mg(2+) pocket. Residue Phe448 participates in L-phenylalanine binding.

This sequence belongs to the class-II aminoacyl-tRNA synthetase family. Phe-tRNA synthetase alpha subunit type 2 subfamily. Tetramer of two alpha and two beta subunits. Mg(2+) is required as a cofactor.

The protein localises to the cytoplasm. The catalysed reaction is tRNA(Phe) + L-phenylalanine + ATP = L-phenylalanyl-tRNA(Phe) + AMP + diphosphate + H(+). In Halobacterium salinarum (strain ATCC 29341 / DSM 671 / R1), this protein is Phenylalanine--tRNA ligase alpha subunit.